Reading from the N-terminus, the 67-residue chain is Conotoxin ArMLCL-012 (67 aa).

An N-terminal signal peptide occupies residues 1 to 19; it reads MLCLPVFIILLLLASPAAS. A propeptide spanning residues 20 to 45 is cleaved from the precursor; the sequence is NPLEKRIQSDLIRAALEDADTKNDPR. C64 is subject to Cysteine amide.

It belongs to the conotoxin T superfamily. Contains 2 disulfide bonds that can be either 'C1-C3, C2-C4' or 'C1-C4, C2-C3', since these disulfide connectivities have been observed for conotoxins with cysteine framework V (for examples, see AC P0DQQ7 and AC P81755). As to expression, expressed by the venom duct.

The protein localises to the secreted. The chain is Conotoxin ArMLCL-012 from Conus arenatus (Sand-dusted cone).